The following is a 281-amino-acid chain: ATP phosphoribosyltransferase (281 aa).

It belongs to the ATP phosphoribosyltransferase family. Long subfamily. It depends on Mg(2+) as a cofactor.

The protein localises to the cytoplasm. The catalysed reaction is 1-(5-phospho-beta-D-ribosyl)-ATP + diphosphate = 5-phospho-alpha-D-ribose 1-diphosphate + ATP. The protein operates within amino-acid biosynthesis; L-histidine biosynthesis; L-histidine from 5-phospho-alpha-D-ribose 1-diphosphate: step 1/9. With respect to regulation, feedback inhibited by histidine. Its function is as follows. Catalyzes the condensation of ATP and 5-phosphoribose 1-diphosphate to form N'-(5'-phosphoribosyl)-ATP (PR-ATP). Has a crucial role in the pathway because the rate of histidine biosynthesis seems to be controlled primarily by regulation of HisG enzymatic activity. This Corynebacterium jeikeium (strain K411) protein is ATP phosphoribosyltransferase.